A 233-amino-acid chain; its full sequence is Chalcone--flavanone isomerase (233 aa).

Substrate is bound by residues Thr-47, Asn-113, and Ser-192.

It belongs to the chalcone isomerase family.

It catalyses the reaction a chalcone = a flavanone.. It functions in the pathway secondary metabolite biosynthesis; flavonoid biosynthesis. Catalyzes the intramolecular cyclization of bicyclic chalcones into tricyclic (S)-flavanones. Responsible for the isomerization of 4,2',4',6'-tetrahydroxychalcone (also termed chalcone) into naringenin. The polypeptide is Chalcone--flavanone isomerase (CHI) (Oryza sativa subsp. japonica (Rice)).